Consider the following 323-residue polypeptide: Fructose-1,6-bisphosphatase class 1 (323 aa).

Residues Glu-93, Asp-114, Leu-116, and Asp-117 each contribute to the Mg(2+) site. Residues 117–120, Asn-205, Tyr-233, and Lys-263 each bind substrate; that span reads DGSS. Mg(2+) is bound at residue Glu-269.

This sequence belongs to the FBPase class 1 family. As to quaternary structure, homotetramer. It depends on Mg(2+) as a cofactor.

It is found in the cytoplasm. It catalyses the reaction beta-D-fructose 1,6-bisphosphate + H2O = beta-D-fructose 6-phosphate + phosphate. It participates in carbohydrate biosynthesis; gluconeogenesis. This chain is Fructose-1,6-bisphosphatase class 1, found in Sulfurihydrogenibium sp. (strain YO3AOP1).